The chain runs to 890 residues: DNA mismatch repair protein MutS (890 aa).

Over residues 1 to 13 (MDKGINLQNDKEP) the composition is skewed to basic and acidic residues. The tract at residues 1-23 (MDKGINLQNDKEPSPMAEGNPAD) is disordered. 649-656 (GPNMGGKS) contributes to the ATP binding site.

It belongs to the DNA mismatch repair MutS family.

Functionally, this protein is involved in the repair of mismatches in DNA. It is possible that it carries out the mismatch recognition step. This protein has a weak ATPase activity. This Paracidovorax citrulli (strain AAC00-1) (Acidovorax citrulli) protein is DNA mismatch repair protein MutS.